The chain runs to 317 residues: Acetyl-coenzyme A carboxylase carboxyl transferase subunit alpha (317 aa).

A CoA carboxyltransferase C-terminal domain is found at 40 to 293 (LEGRVRDAMM…GTVIADALKE (254 aa)).

It belongs to the AccA family. As to quaternary structure, acetyl-CoA carboxylase is a heterohexamer composed of biotin carboxyl carrier protein (AccB), biotin carboxylase (AccC) and two subunits each of ACCase subunit alpha (AccA) and ACCase subunit beta (AccD).

Its subcellular location is the cytoplasm. It catalyses the reaction N(6)-carboxybiotinyl-L-lysyl-[protein] + acetyl-CoA = N(6)-biotinyl-L-lysyl-[protein] + malonyl-CoA. It participates in lipid metabolism; malonyl-CoA biosynthesis; malonyl-CoA from acetyl-CoA: step 1/1. Component of the acetyl coenzyme A carboxylase (ACC) complex. First, biotin carboxylase catalyzes the carboxylation of biotin on its carrier protein (BCCP) and then the CO(2) group is transferred by the carboxyltransferase to acetyl-CoA to form malonyl-CoA. In Sinorhizobium fredii (strain NBRC 101917 / NGR234), this protein is Acetyl-coenzyme A carboxylase carboxyl transferase subunit alpha.